Reading from the N-terminus, the 253-residue chain is Triosephosphate isomerase (253 aa).

9–11 (NWK) serves as a coordination point for substrate. Residue H97 is the Electrophile of the active site. Residue E169 is the Proton acceptor of the active site. Substrate-binding positions include G175, S215, and 236 to 237 (GG).

It belongs to the triosephosphate isomerase family. As to quaternary structure, homodimer.

It localises to the cytoplasm. The enzyme catalyses D-glyceraldehyde 3-phosphate = dihydroxyacetone phosphate. It functions in the pathway carbohydrate biosynthesis; gluconeogenesis. It participates in carbohydrate degradation; glycolysis; D-glyceraldehyde 3-phosphate from glycerone phosphate: step 1/1. Functionally, involved in the gluconeogenesis. Catalyzes stereospecifically the conversion of dihydroxyacetone phosphate (DHAP) to D-glyceraldehyde-3-phosphate (G3P). This is Triosephosphate isomerase from Staphylococcus aureus (strain NCTC 8325 / PS 47).